A 613-amino-acid polypeptide reads, in one-letter code: Cleavage and polyadenylation specificity factor subunit 3-II (613 aa).

The HXHXDH motif signature appears at 67–72 (HFHMDH).

The protein belongs to the metallo-beta-lactamase superfamily. RNA-metabolizing metallo-beta-lactamase-like family. INTS11 subfamily. Component of the CPSF complex, at least composed of CPSF160, CPSF100, CPSF73-I, CPSF73-II, CPSF30, FY and FIPS5. Interacts with CPSF30, CPSF100, CPSF160 and FY. As to expression, highly expressed in senescence leaves, petals, stamens, pollen and late stages of siliques with seeds. Also detected in roots, stems, leaves and seedlings.

It is found in the nucleus. Functionally, component of the cleavage and polyadenylation specificity factor (CPSF) complex that play a key role in pre-mRNA 3'-end formation, recognizing the AAUAAA signal sequence and interacting with poly(A) polymerase and other factors to bring about cleavage and poly(A) addition. May function as mRNA 3'-end-processing endonuclease and also be involved in the histone 3'-end pre-mRNA processing. This Arabidopsis thaliana (Mouse-ear cress) protein is Cleavage and polyadenylation specificity factor subunit 3-II (CPSF73-II).